The sequence spans 107 residues: Replication protein A 14 kDa subunit A (107 aa).

N-acetylmethionine is present on Met-1.

Belongs to the replication factor A protein 3 family. As to quaternary structure, component of the heterotrimeric canonical replication protein A complex (RPA).

It localises to the nucleus. As part of the replication protein A (RPA/RP-A), a single-stranded DNA-binding heterotrimeric complex, may play an essential role in DNA replication, recombination and repair. Binds and stabilizes single-stranded DNA intermediates, preventing complementary DNA reannealing and recruiting different proteins involved in DNA metabolism. The sequence is that of Replication protein A 14 kDa subunit A (RPA3A) from Arabidopsis thaliana (Mouse-ear cress).